The sequence spans 449 residues: Glutamyl-tRNA reductase (449 aa).

Substrate contacts are provided by residues threonine 58–arginine 61, serine 121, glutamate 126–glutamine 128, and glutamine 132. Cysteine 59 serves as the catalytic Nucleophile. Residue glycine 203–alanine 208 coordinates NADP(+).

This sequence belongs to the glutamyl-tRNA reductase family. Homodimer.

It catalyses the reaction (S)-4-amino-5-oxopentanoate + tRNA(Glu) + NADP(+) = L-glutamyl-tRNA(Glu) + NADPH + H(+). It participates in porphyrin-containing compound metabolism; protoporphyrin-IX biosynthesis; 5-aminolevulinate from L-glutamyl-tRNA(Glu): step 1/2. Its function is as follows. Catalyzes the NADPH-dependent reduction of glutamyl-tRNA(Glu) to glutamate 1-semialdehyde (GSA). The chain is Glutamyl-tRNA reductase from Helicobacter pylori (strain P12).